Here is a 74-residue protein sequence, read N- to C-terminus: Hadrucalcin (74 aa).

A signal peptide spans 1 to 27 (MKTSSLTIIFIAVIITIICLNIHDIEA). The propeptide occupies 28-39 (REIEFNAGRVVR). Intrachain disulfides connect cysteine 44-cysteine 58, cysteine 51-cysteine 62, and cysteine 57-cysteine 73. The tract at residues 64-65 (RR) is essential for stimulation of [3H]ryanodine binding to RYR1.

In terms of tissue distribution, expressed by the venom gland.

The protein localises to the secreted. In terms of biological role, this toxin activates ryanodine receptors RyR1 and RyR2 by inducing a long-lasting subconductance state (35% of the full conductance stateon RyR1). Furthermore, it triggers calcium release from sarcoplasmic vesicles (11.8 nM are enough to induce a sharp release on RyR1, and 55% of the total calcium is released after toxin (100 nM) addition on RyR1) probably by acting as a cell-penetrating peptide (CPP). In addition, it has been shown to dose-dependently stimulate ryanodine binding to RyR1 (EC(50)=14.8 nM). It also augments the bell-shaped calcium-[3H]ryanodine binding curve that is maximal at about 10 uM calcium concentration. It binds a different site as ryanodine. It acts synergistically with caffeine. In vivo, intracerebroventricular injection into mice induces neurotoxic symptoms, followed by death. This is Hadrucalcin from Hoffmannihadrurus gertschi (Scorpion).